A 236-amino-acid polypeptide reads, in one-letter code: MENISKTSVIIVAAGKGKRMGRDYNKQYIQLEAQPIVAHTIKVFEEMDCINEIILVVGAGEVEFLKKSIIEVYGFQKVSAIVEGGLERRDSVYNGLKAVSQDCSIVLIHDGARPLITKDIIEESIIVAKESGACIAAVPVKDTIKISNDNMEVIHTPKRDNLWSVQTPQTFQYDLILEAYNHQQPKDSTATDDAMILEALGHTVKIIHGSYNNIKITTPEDLIVAEEILKTRREGR.

The protein belongs to the IspD/TarI cytidylyltransferase family. IspD subfamily.

The catalysed reaction is 2-C-methyl-D-erythritol 4-phosphate + CTP + H(+) = 4-CDP-2-C-methyl-D-erythritol + diphosphate. The protein operates within isoprenoid biosynthesis; isopentenyl diphosphate biosynthesis via DXP pathway; isopentenyl diphosphate from 1-deoxy-D-xylulose 5-phosphate: step 2/6. Catalyzes the formation of 4-diphosphocytidyl-2-C-methyl-D-erythritol from CTP and 2-C-methyl-D-erythritol 4-phosphate (MEP). This Alkaliphilus oremlandii (strain OhILAs) (Clostridium oremlandii (strain OhILAs)) protein is 2-C-methyl-D-erythritol 4-phosphate cytidylyltransferase.